Here is a 219-residue protein sequence, read N- to C-terminus: GPI ethanolamine phosphate transferase, stabilizing subunit (219 aa).

6 helical membrane passes run 11–31 (YTHL…SLFL), 42–62 (TWLC…YLVV), 86–106 (YFLM…APLI), 113–133 (FLFA…LLGP), 155–175 (LQIT…PIPL), and 189–209 (TLGA…WIYW).

This sequence belongs to the PIGF family. Part of the ethanolamine phosphate transferase 3 complex composed by PIGO and PIGF. Part of the ethanolamine phosphate transferase 2 complex with PIGG. PIGF is required to stabilize PIGG and PIGO.

The protein resides in the endoplasmic reticulum membrane. Its pathway is glycolipid biosynthesis; glycosylphosphatidylinositol-anchor biosynthesis. Its function is as follows. Stabilizing subunit of the ethanolamine phosphate transferase 3 and ethanolamine phosphate transferase 2 complexes that sequentially transfer an ethanolamine phosphate (EtNP) from a phosphatidylethanolamine (PE) to the 6-OH position of the third alpha-1,2-linked mannose and the second alpha-1,6-linked mannose of the alpha-D-Man-(1-&gt;2)-alpha-D-Man-(1-&gt;6)-2-PEtn-alpha-D-Man-(1-&gt;4)-alpha-D-GlcN-(1-&gt;6)-(1-radyl,2-acyl-sn-glycero-3-phospho)-2-acyl-inositol (also termed H6) intermediate to generate a 6-PEtn-alpha-D-Man-(1-&gt;2)-6-PEtn-alpha-D-Man-(1-&gt;6)-2-PEtn-alpha-D-Man-(1-&gt;4)-alpha-D-GlcN-(1-&gt;6)-(1-radyl,2-acyl-sn-glycero-3-phospho)-2-acyl-inositol (also termed H8). Participates in the tenth and eleventh steps of the glycosylphosphatidylinositol-anchor biosynthesis, in association with PIGO and PIGG, respectively. This Homo sapiens (Human) protein is GPI ethanolamine phosphate transferase, stabilizing subunit.